Reading from the N-terminus, the 349-residue chain is tRNA pseudouridine synthase D (349 aa).

Residue Phe-26 participates in substrate binding. The Nucleophile role is filled by Asp-79. Asn-128 lines the substrate pocket. The region spanning 154–302 is the TRUD domain; it reads GVPNYFGSQR…VEGSRRAVLL (149 aa). Position 328 (Phe-328) interacts with substrate.

This sequence belongs to the pseudouridine synthase TruD family.

It catalyses the reaction uridine(13) in tRNA = pseudouridine(13) in tRNA. Its function is as follows. Responsible for synthesis of pseudouridine from uracil-13 in transfer RNAs. The protein is tRNA pseudouridine synthase D of Yersinia pseudotuberculosis serotype IB (strain PB1/+).